Reading from the N-terminus, the 262-residue chain is Cytochrome c oxidase subunit 2 (262 aa).

2 helical membrane-spanning segments follow: residues 31-51 and 72-92; these read HIMF…YVII and IIWT…SFIL. Cu cation contacts are provided by histidine 175, cysteine 210, glutamate 212, cysteine 214, histidine 218, and methionine 221. Glutamate 212 lines the Mg(2+) pocket.

The protein belongs to the cytochrome c oxidase subunit 2 family. As to quaternary structure, component of the cytochrome c oxidase (complex IV, CIV), a multisubunit enzyme composed of a catalytic core of 3 subunits and several supernumerary subunits. The complex exists as a monomer or a dimer and forms supercomplexes (SCs) in the inner mitochondrial membrane with ubiquinol-cytochrome c oxidoreductase (cytochrome b-c1 complex, complex III, CIII). The cofactor is Cu cation.

The protein localises to the mitochondrion inner membrane. It catalyses the reaction 4 Fe(II)-[cytochrome c] + O2 + 8 H(+)(in) = 4 Fe(III)-[cytochrome c] + 2 H2O + 4 H(+)(out). Its function is as follows. Component of the cytochrome c oxidase, the last enzyme in the mitochondrial electron transport chain which drives oxidative phosphorylation. The respiratory chain contains 3 multisubunit complexes succinate dehydrogenase (complex II, CII), ubiquinol-cytochrome c oxidoreductase (cytochrome b-c1 complex, complex III, CIII) and cytochrome c oxidase (complex IV, CIV), that cooperate to transfer electrons derived from NADH and succinate to molecular oxygen, creating an electrochemical gradient over the inner membrane that drives transmembrane transport and the ATP synthase. Cytochrome c oxidase is the component of the respiratory chain that catalyzes the reduction of oxygen to water. Electrons originating from reduced cytochrome c in the intermembrane space (IMS) are transferred via the dinuclear copper A center (CU(A)) of subunit 2 and heme A of subunit 1 to the active site in subunit 1, a binuclear center (BNC) formed by heme A3 and copper B (CU(B)). The BNC reduces molecular oxygen to 2 water molecules using 4 electrons from cytochrome c in the IMS and 4 protons from the mitochondrial matrix. The sequence is that of Cytochrome c oxidase subunit 2 (COX2) from Candida albicans (strain SC5314 / ATCC MYA-2876) (Yeast).